The following is a 317-amino-acid chain: Putative 2-hydroxyacid dehydrogenase SERP1888 (317 aa).

Residues 155–156, 234–236, and Asp260 each bind NAD(+); these read EI and AGR. Arg236 is a catalytic residue. Glu265 is a catalytic residue. His283 (proton donor) is an active-site residue. Position 283-286 (283-286) interacts with NAD(+); that stretch reads HIGN.

This sequence belongs to the D-isomer specific 2-hydroxyacid dehydrogenase family.

The polypeptide is Putative 2-hydroxyacid dehydrogenase SERP1888 (Staphylococcus epidermidis (strain ATCC 35984 / DSM 28319 / BCRC 17069 / CCUG 31568 / BM 3577 / RP62A)).